Here is a 264-residue protein sequence, read N- to C-terminus: Ribonuclease H (264 aa).

A disordered region spans residues 55-88 (GSRYSSSSGPYRRSTTSYGYSPYSSSSSNYSARH). Residues 56–85 (SRYSSSSGPYRRSTTSYGYSPYSSSSSNYS) show a composition bias toward low complexity. S97 is subject to Phosphoserine. The RNase H type-1 domain occupies 120–263 (CSDRQVVYAD…ADMLARRGAS (144 aa)). D129, E171, D191, and D255 together coordinate Mg(2+).

This sequence belongs to the RNase H family. The cofactor is Mg(2+).

It catalyses the reaction Endonucleolytic cleavage to 5'-phosphomonoester.. In terms of biological role, endonuclease that specifically degrades the RNA of RNA-DNA hybrids. This Schizosaccharomyces pombe (strain 972 / ATCC 24843) (Fission yeast) protein is Ribonuclease H (rnh1).